Consider the following 354-residue polypeptide: Peptide chain release factor 1 (354 aa).

Residue glutamine 230 is modified to N5-methylglutamine.

The protein belongs to the prokaryotic/mitochondrial release factor family. Methylated by PrmC. Methylation increases the termination efficiency of RF1.

It is found in the cytoplasm. Its function is as follows. Peptide chain release factor 1 directs the termination of translation in response to the peptide chain termination codons UAG and UAA. The protein is Peptide chain release factor 1 of Thermus thermophilus (strain ATCC BAA-163 / DSM 7039 / HB27).